Reading from the N-terminus, the 281-residue chain is tRNA dimethylallyltransferase (281 aa).

Interaction with substrate tRNA regions lie at residues 13 to 16 (DSAQ) and 133 to 137 (QRITR).

This sequence belongs to the IPP transferase family. As to quaternary structure, monomer. Mg(2+) is required as a cofactor.

The enzyme catalyses adenosine(37) in tRNA + dimethylallyl diphosphate = N(6)-dimethylallyladenosine(37) in tRNA + diphosphate. Its function is as follows. Catalyzes the transfer of a dimethylallyl group onto the adenine at position 37 in tRNAs that read codons beginning with uridine, leading to the formation of N6-(dimethylallyl)adenosine (i(6)A). This Novosphingobium aromaticivorans (strain ATCC 700278 / DSM 12444 / CCUG 56034 / CIP 105152 / NBRC 16084 / F199) protein is tRNA dimethylallyltransferase.